A 327-amino-acid polypeptide reads, in one-letter code: Ribose-phosphate pyrophosphokinase (327 aa).

ATP is bound by residues asparagine 46–glutamate 48 and arginine 105–glutamine 106. 2 residues coordinate Mg(2+): histidine 139 and aspartate 179. Residue lysine 203 is part of the active site. D-ribose 5-phosphate is bound by residues arginine 205, aspartate 231, and aspartate 235–threonine 239.

It belongs to the ribose-phosphate pyrophosphokinase family. Class I subfamily. Homohexamer. Mg(2+) serves as cofactor.

The protein localises to the cytoplasm. The enzyme catalyses D-ribose 5-phosphate + ATP = 5-phospho-alpha-D-ribose 1-diphosphate + AMP + H(+). It participates in metabolic intermediate biosynthesis; 5-phospho-alpha-D-ribose 1-diphosphate biosynthesis; 5-phospho-alpha-D-ribose 1-diphosphate from D-ribose 5-phosphate (route I): step 1/1. Involved in the biosynthesis of the central metabolite phospho-alpha-D-ribosyl-1-pyrophosphate (PRPP) via the transfer of pyrophosphoryl group from ATP to 1-hydroxyl of ribose-5-phosphate (Rib-5-P). In Mycobacterium leprae (strain TN), this protein is Ribose-phosphate pyrophosphokinase.